The chain runs to 469 residues: Uronate isomerase (469 aa).

The protein belongs to the metallo-dependent hydrolases superfamily. Uronate isomerase family.

The enzyme catalyses D-glucuronate = D-fructuronate. The catalysed reaction is aldehydo-D-galacturonate = keto-D-tagaturonate. Its pathway is carbohydrate metabolism; pentose and glucuronate interconversion. This chain is Uronate isomerase, found in Pectobacterium atrosepticum (strain SCRI 1043 / ATCC BAA-672) (Erwinia carotovora subsp. atroseptica).